A 389-amino-acid polypeptide reads, in one-letter code: COP9 signalosome complex subunit 11 (389 aa).

Residues 143–312 (QLIIDIPNLV…ILYQKFDPQM (170 aa)) enclose the PCI domain.

In terms of assembly, component of a COP9 signalosome-like (CSN) complex.

The protein resides in the cytoplasm. Its subcellular location is the nucleus. Its function is as follows. Component of the COP9 signalosome (CSN) complex that acts as an regulator of the ubiquitin (Ubl) conjugation pathway by mediating the deneddylation of the cullin subunit of SCF-type E3 ubiquitin-protein ligase complexes The CSN complex is involved in the regulation of the mating pheromone response. PCI8 may also be involved in transcriptional and translational control. The protein is COP9 signalosome complex subunit 11 (PCI8) of Kluyveromyces lactis (strain ATCC 8585 / CBS 2359 / DSM 70799 / NBRC 1267 / NRRL Y-1140 / WM37) (Yeast).